A 113-amino-acid polypeptide reads, in one-letter code: Large ribosomal subunit protein bL19 (113 aa).

Belongs to the bacterial ribosomal protein bL19 family.

In terms of biological role, this protein is located at the 30S-50S ribosomal subunit interface and may play a role in the structure and function of the aminoacyl-tRNA binding site. The sequence is that of Large ribosomal subunit protein bL19 from Mycolicibacterium gilvum (strain PYR-GCK) (Mycobacterium gilvum (strain PYR-GCK)).